Here is a 362-residue protein sequence, read N- to C-terminus: Adenosine deaminase (362 aa).

The Zn(2+) site is built by His-19 and His-21. His-21, Asp-23, and Gly-181 together coordinate substrate. His-208 is a Zn(2+) binding site. The Proton donor role is filled by Glu-211. Asp-300 provides a ligand contact to Zn(2+).

This sequence belongs to the metallo-dependent hydrolases superfamily. Adenosine and AMP deaminases family. Adenosine deaminase subfamily. Zn(2+) serves as cofactor.

It carries out the reaction adenosine + H2O + H(+) = inosine + NH4(+). The enzyme catalyses 2'-deoxyadenosine + H2O + H(+) = 2'-deoxyinosine + NH4(+). Functionally, catalyzes the hydrolytic deamination of adenosine and 2-deoxyadenosine. The protein is Adenosine deaminase of Mycobacterium marinum (strain ATCC BAA-535 / M).